The chain runs to 72 residues: Translation initiation factor IF-1 (72 aa).

One can recognise an S1-like domain in the interval 1–72 (MSKEDSFEME…SKGRITYRAR (72 aa)).

This sequence belongs to the IF-1 family. Component of the 30S ribosomal translation pre-initiation complex which assembles on the 30S ribosome in the order IF-2 and IF-3, IF-1 and N-formylmethionyl-tRNA(fMet); mRNA recruitment can occur at any time during PIC assembly.

The protein localises to the cytoplasm. One of the essential components for the initiation of protein synthesis. Stabilizes the binding of IF-2 and IF-3 on the 30S subunit to which N-formylmethionyl-tRNA(fMet) subsequently binds. Helps modulate mRNA selection, yielding the 30S pre-initiation complex (PIC). Upon addition of the 50S ribosomal subunit IF-1, IF-2 and IF-3 are released leaving the mature 70S translation initiation complex. This is Translation initiation factor IF-1 from Pseudomonas savastanoi pv. phaseolicola (strain 1448A / Race 6) (Pseudomonas syringae pv. phaseolicola (strain 1448A / Race 6)).